Reading from the N-terminus, the 321-residue chain is o-succinylbenzoate synthase (321 aa).

Lys134 serves as the catalytic Proton donor. Residues Asp162, Glu191, and Asp214 each contribute to the Mg(2+) site. Residue Lys236 is the Proton acceptor of the active site.

It belongs to the mandelate racemase/muconate lactonizing enzyme family. MenC type 1 subfamily. A divalent metal cation serves as cofactor.

The enzyme catalyses (1R,6R)-6-hydroxy-2-succinyl-cyclohexa-2,4-diene-1-carboxylate = 2-succinylbenzoate + H2O. It participates in quinol/quinone metabolism; 1,4-dihydroxy-2-naphthoate biosynthesis; 1,4-dihydroxy-2-naphthoate from chorismate: step 4/7. Its pathway is quinol/quinone metabolism; menaquinone biosynthesis. Its function is as follows. Converts 2-succinyl-6-hydroxy-2,4-cyclohexadiene-1-carboxylate (SHCHC) to 2-succinylbenzoate (OSB). The protein is o-succinylbenzoate synthase of Klebsiella pneumoniae (strain 342).